Reading from the N-terminus, the 257-residue chain is NAD-capped RNA hydrolase NudC (257 aa).

Residues Lys-25 and Arg-69 each coordinate substrate. Zn(2+) is bound by residues Cys-98 and Cys-101. Residue Glu-111 coordinates substrate. Zn(2+)-binding residues include Cys-116 and Cys-119. Tyr-124 is a substrate binding site. Residues 125 to 248 (PQIAPCIIVA…TVARRLIEDT (124 aa)) enclose the Nudix hydrolase domain. Residues Ala-158, Glu-174, and Glu-178 each contribute to the a divalent metal cation site. The short motif at 159–180 (GFVEVGETLEQAVAREVMEESG) is the Nudix box element. 192-199 (QPWPFPQS) serves as a coordination point for substrate. Glu-219 serves as a coordination point for a divalent metal cation. Ala-241 serves as a coordination point for substrate.

This sequence belongs to the Nudix hydrolase family. NudC subfamily. As to quaternary structure, homodimer. Mg(2+) is required as a cofactor. Mn(2+) serves as cofactor. It depends on Zn(2+) as a cofactor.

The catalysed reaction is a 5'-end NAD(+)-phospho-ribonucleoside in mRNA + H2O = a 5'-end phospho-adenosine-phospho-ribonucleoside in mRNA + beta-nicotinamide D-ribonucleotide + 2 H(+). It carries out the reaction NAD(+) + H2O = beta-nicotinamide D-ribonucleotide + AMP + 2 H(+). The enzyme catalyses NADH + H2O = reduced beta-nicotinamide D-ribonucleotide + AMP + 2 H(+). In terms of biological role, mRNA decapping enzyme that specifically removes the nicotinamide adenine dinucleotide (NAD) cap from a subset of mRNAs by hydrolyzing the diphosphate linkage to produce nicotinamide mononucleotide (NMN) and 5' monophosphate mRNA. The NAD-cap is present at the 5'-end of some mRNAs and stabilizes RNA against 5'-processing. Has preference for mRNAs with a 5'-end purine. Catalyzes the hydrolysis of a broad range of dinucleotide pyrophosphates. The sequence is that of NAD-capped RNA hydrolase NudC from Escherichia coli O7:K1 (strain IAI39 / ExPEC).